Reading from the N-terminus, the 914-residue chain is Eukaryotic initiation factor 4F subunit p130 (914 aa).

The span at 1-12 (MTDQRGPPPPHP) shows a compositional bias: pro residues. Disordered regions lie at residues 1 to 84 (MTDQ…YNNR), 128 to 205 (PPYT…NEAV), 240 to 351 (ERKK…VNKS), and 457 to 535 (IARN…LVPS). Polar residues predominate over residues 26-44 (NQYSGANNSQPNNHYNENL). Positions 59–73 (KNGKYGTNKYNNRNN) are enriched in low complexity. A Phosphoserine modification is found at Ser-74. Over residues 145 to 155 (PKTTKIEITTK) the composition is skewed to low complexity. The segment covering 156–195 (TGERLNLKKFHEEKKASKGEEKNDGVEQKSKSGTPFEKEA) has biased composition (basic and acidic residues). Thr-196 bears the Phosphothreonine mark. The interaction with PAB1 stretch occupies residues 201–315 (ANEAVKDTLT…TGSVTKSVTF (115 aa)). A compositionally biased stretch (basic and acidic residues) spans 240–263 (ERKKNGLISETEKKQETSNHDNTD). 2 stretches are compositionally biased toward polar residues: residues 298 to 325 (SVKT…SSSQ) and 339 to 348 (ISDTTGGKTV). A Phosphothreonine modification is found at Thr-301. Residues 496–529 (RMGDDRRSNRGYTSRKDREKAAEKAEEQAPKEEI) show a composition bias toward basic and acidic residues. Position 503 is a phosphoserine (Ser-503). In terms of domain architecture, MIF4G spans 567-810 (ERKMKSLLNK…IDVKELREIK (244 aa)). The interval 833–914 (QLRQKKNSQR…ALMNNDGDSD (82 aa)) is disordered. Low complexity predominate over residues 841–867 (QRSNSRFNNHNQSNSNRYSSNRRNMQN). A compositionally biased stretch (polar residues) spans 868-886 (TQRDSFASTKTGSFRNNQR). Ser-913 is modified (phosphoserine).

The protein belongs to the eukaryotic initiation factor 4G family. In terms of assembly, component of the eIF4F complex, which composition varies with external and internal environmental conditions. It is composed of at least eIF4A (TIF1/TIF2), eIF4E (TIF45) and eIF4G (TIF4631 or TIF4632). Interacts with PAT1 in a RNA-dependent manner.

The protein localises to the cytoplasm. In terms of biological role, component of the eIF4F complex, which interacts with the mRNA cap structure and serves as an initial point of assembly for the translation apparatus. Stimulates translation by interaction with polyadenylate-binding protein PAB1, bringing the 5'- and 3'-ends of the mRNA in proximity. The formation of this circular mRNP structure appears to be critical for the synergistic effects of the cap and the poly(A) tail in facilitating translation initiation, recycling of ribosomes, and mRNA stability. TIF4632 is probably essential when TIF4631 is missing. This is Eukaryotic initiation factor 4F subunit p130 from Saccharomyces cerevisiae (strain ATCC 204508 / S288c) (Baker's yeast).